The chain runs to 252 residues: Imidazole glycerol phosphate synthase subunit HisF (252 aa).

Residues aspartate 11 and aspartate 130 contribute to the active site.

The protein belongs to the HisA/HisF family. In terms of assembly, heterodimer of HisH and HisF.

The protein localises to the cytoplasm. It carries out the reaction 5-[(5-phospho-1-deoxy-D-ribulos-1-ylimino)methylamino]-1-(5-phospho-beta-D-ribosyl)imidazole-4-carboxamide + L-glutamine = D-erythro-1-(imidazol-4-yl)glycerol 3-phosphate + 5-amino-1-(5-phospho-beta-D-ribosyl)imidazole-4-carboxamide + L-glutamate + H(+). It participates in amino-acid biosynthesis; L-histidine biosynthesis; L-histidine from 5-phospho-alpha-D-ribose 1-diphosphate: step 5/9. In terms of biological role, IGPS catalyzes the conversion of PRFAR and glutamine to IGP, AICAR and glutamate. The HisF subunit catalyzes the cyclization activity that produces IGP and AICAR from PRFAR using the ammonia provided by the HisH subunit. The chain is Imidazole glycerol phosphate synthase subunit HisF from Streptococcus sanguinis (strain SK36).